The primary structure comprises 300 residues: Haloalkane dehalogenase 1 (300 aa).

Residues 47 to 176 (PPIVLLHGEP…FARYSPVLPA (130 aa)) form the AB hydrolase-1 domain. Residue D123 is the Nucleophile of the active site. D250 serves as the catalytic Proton donor. H279 acts as the Proton acceptor in catalysis.

The protein belongs to the haloalkane dehalogenase family. Type 1 subfamily. Monomer.

It carries out the reaction 1-haloalkane + H2O = a halide anion + a primary alcohol + H(+). Catalyzes hydrolytic cleavage of carbon-halogen bonds in halogenated aliphatic compounds, leading to the formation of the corresponding primary alcohols, halide ions and protons. The chain is Haloalkane dehalogenase 1 (dhmA1) from Mycobacterium bovis (strain ATCC BAA-935 / AF2122/97).